A 308-amino-acid polypeptide reads, in one-letter code: Oxygen-dependent coproporphyrinogen-III oxidase (308 aa).

Ser100 is a substrate binding site. A divalent metal cation-binding residues include His104 and His114. His114 acts as the Proton donor in catalysis. Position 116–118 (116–118) interacts with substrate; the sequence is NFR. 2 residues coordinate a divalent metal cation: His153 and His183. Residues 248–283 are important for dimerization; that stretch reads YVEFNLVFDRGTIFGLQSGGRTESILSSMPPMASWR. 266-268 lines the substrate pocket; sequence GGR.

The protein belongs to the aerobic coproporphyrinogen-III oxidase family. Homodimer. The cofactor is a divalent metal cation.

It is found in the cytoplasm. It carries out the reaction coproporphyrinogen III + O2 + 2 H(+) = protoporphyrinogen IX + 2 CO2 + 2 H2O. It participates in porphyrin-containing compound metabolism; protoporphyrin-IX biosynthesis; protoporphyrinogen-IX from coproporphyrinogen-III (O2 route): step 1/1. Functionally, involved in the heme biosynthesis. Catalyzes the aerobic oxidative decarboxylation of propionate groups of rings A and B of coproporphyrinogen-III to yield the vinyl groups in protoporphyrinogen-IX. In Francisella tularensis subsp. novicida (strain U112), this protein is Oxygen-dependent coproporphyrinogen-III oxidase.